The sequence spans 475 residues: Ribulose bisphosphate carboxylase large chain (475 aa).

A propeptide spanning residues 1–2 is cleaved from the precursor; that stretch reads MS. Proline 3 carries the post-translational modification N-acetylproline. Position 14 is an N6,N6,N6-trimethyllysine (lysine 14). The substrate site is built by asparagine 123 and threonine 173. Lysine 175 (proton acceptor) is an active-site residue. Substrate is bound at residue lysine 177. Positions 201, 203, and 204 each coordinate Mg(2+). At lysine 201 the chain carries N6-carboxylysine. Histidine 294 acts as the Proton acceptor in catalysis. 3 residues coordinate substrate: arginine 295, histidine 327, and serine 379.

The protein belongs to the RuBisCO large chain family. Type I subfamily. Heterohexadecamer of 8 large chains and 8 small chains; disulfide-linked. The disulfide link is formed within the large subunit homodimers. Mg(2+) is required as a cofactor. In terms of processing, the disulfide bond which can form in the large chain dimeric partners within the hexadecamer appears to be associated with oxidative stress and protein turnover.

It localises to the plastid. Its subcellular location is the chloroplast. It catalyses the reaction 2 (2R)-3-phosphoglycerate + 2 H(+) = D-ribulose 1,5-bisphosphate + CO2 + H2O. It carries out the reaction D-ribulose 1,5-bisphosphate + O2 = 2-phosphoglycolate + (2R)-3-phosphoglycerate + 2 H(+). In terms of biological role, ruBisCO catalyzes two reactions: the carboxylation of D-ribulose 1,5-bisphosphate, the primary event in carbon dioxide fixation, as well as the oxidative fragmentation of the pentose substrate in the photorespiration process. Both reactions occur simultaneously and in competition at the same active site. The sequence is that of Ribulose bisphosphate carboxylase large chain from Equisetum arvense (Field horsetail).